Here is a 283-residue protein sequence, read N- to C-terminus: Pantothenate synthetase (283 aa).

31–38 (MGALHDGH) provides a ligand contact to ATP. His-38 serves as the catalytic Proton donor. Gln-62 lines the (R)-pantoate pocket. Beta-alanine is bound at residue Gln-62. 148–151 (GKKD) contributes to the ATP binding site. Gln-154 provides a ligand contact to (R)-pantoate. ATP is bound by residues Ile-177 and 185 to 188 (KSSR).

Belongs to the pantothenate synthetase family. Homodimer.

Its subcellular location is the cytoplasm. The enzyme catalyses (R)-pantoate + beta-alanine + ATP = (R)-pantothenate + AMP + diphosphate + H(+). The protein operates within cofactor biosynthesis; (R)-pantothenate biosynthesis; (R)-pantothenate from (R)-pantoate and beta-alanine: step 1/1. In terms of biological role, catalyzes the condensation of pantoate with beta-alanine in an ATP-dependent reaction via a pantoyl-adenylate intermediate. This Oceanobacillus iheyensis (strain DSM 14371 / CIP 107618 / JCM 11309 / KCTC 3954 / HTE831) protein is Pantothenate synthetase.